A 362-amino-acid chain; its full sequence is Probable endopolygalacturonase B (362 aa).

A signal peptide spans Met-1–Ala-20. A propeptide spanning residues Thr-21–Lys-25 is cleaved from the precursor. Cys-28 and Cys-43 are oxidised to a cystine. 6 PbH1 repeats span residues Ala-155–Gln-184, Ser-185–Ser-206, Gly-207–Ser-227, Val-236–Thr-257, Val-265–Gln-287, and Thr-299–Gly-344. Asp-199 acts as the Proton donor in catalysis. An intrachain disulfide couples Cys-201 to Cys-217. The active site involves His-221. An intrachain disulfide couples Cys-327 to Cys-332. Asn-334 is a glycosylation site (N-linked (GlcNAc...) asparagine). Cysteines 351 and 360 form a disulfide.

Belongs to the glycosyl hydrolase 28 family.

It localises to the secreted. It catalyses the reaction (1,4-alpha-D-galacturonosyl)n+m + H2O = (1,4-alpha-D-galacturonosyl)n + (1,4-alpha-D-galacturonosyl)m.. Involved in maceration and soft-rotting of plant tissue. Hydrolyzes the 1,4-alpha glycosidic bonds of de-esterified pectate in the smooth region of the plant cell wall. The chain is Probable endopolygalacturonase B (pgaB) from Aspergillus kawachii (White koji mold).